The following is a 418-amino-acid chain: Putative competence-damage inducible protein (418 aa).

It belongs to the CinA family.

The protein is Putative competence-damage inducible protein of Streptococcus pneumoniae serotype 2 (strain D39 / NCTC 7466).